The primary structure comprises 610 residues: Zinc metalloproteinase-disintegrin-like halysase (610 aa).

An N-terminal signal peptide occupies residues 1–20 (MIQVLLVTICLAVFPYQGSS). Positions 21 to 182 (IILESGNVND…WESYEPIKKA (162 aa)) are excised as a propeptide. The Peptidase M12B domain occupies 199–395 (KYVKLVMVAD…DMPQCILKKP (197 aa)). A glycan (N-linked (GlcNAc...) asparagine) is linked at asparagine 218. 3 cysteine pairs are disulfide-bonded: cysteine 310/cysteine 390, cysteine 350/cysteine 374, and cysteine 352/cysteine 357. Position 335 (histidine 335) interacts with Zn(2+). Residue glutamate 336 is part of the active site. 2 residues coordinate Zn(2+): histidine 339 and histidine 345. The Disintegrin domain maps to 403–488 (PPVCGNYFVE…AECTDRFQRN (86 aa)). Valine 405, asparagine 408, phenylalanine 410, glutamate 412, glutamate 415, and aspartate 418 together coordinate Ca(2+). 14 disulfide bridges follow: cysteine 406/cysteine 435, cysteine 417/cysteine 430, cysteine 419/cysteine 425, cysteine 429/cysteine 452, cysteine 443/cysteine 449, cysteine 448/cysteine 474, cysteine 461/cysteine 481, cysteine 468/cysteine 499, cysteine 492/cysteine 504, cysteine 511/cysteine 561, cysteine 526/cysteine 572, cysteine 539/cysteine 549, cysteine 556/cysteine 598, and cysteine 592/cysteine 603. A D/ECD-tripeptide motif is present at residues 467–469 (ECD).

It belongs to the venom metalloproteinase (M12B) family. P-III subfamily. P-IIIa sub-subfamily. Monomer. Zn(2+) is required as a cofactor. As to expression, expressed by the venom gland.

The protein localises to the secreted. Its activity is regulated as follows. Inhibited by EDTA and EGTA. Not inhibited by PMSF, antipain, pepstatin, and iodoacetamide. Strongly inhibits the collagen-induced human platelet aggregation (inhibition of alpha-2/beta-1 (ITGA2/ITGB1) integrin). Hydrolyzes the Aalpha-chain of fibrinogen, without cleavage of Bbeta- and gamma-chains. Degrades type IV collagen (but not types I, II and V), fibronectin and vitronectin and also integrins alpha-1/beta-1 (ITGA1/ITGB1) and alpha-5/beta/1 (ITGA5/ITGB1) (but not alpha-V/beta-3 (ITGAV/ITGB3) and alpha-V/beta-5 (ITGAV/ITGB5) integrins). Both metalloproteinase (peptidase M12B) and disintegrin-like domains (recombinantly expressed and named halydin) play characteristic roles to inhibit human platelet aggregation. Induces apoptosis and strongly inhibits proliferation of endothelial cells as well as adhesion of the cells to extracellular matrix proteins. The apoptosis is closely associated with activation of caspase-3 and decreased level of Bcl-X(L)/Bax. Apohalysase, which lacks metalloprotease activity, is also able to induce the apoptosis. Cleaves insulin B chain at '34-His-|-Leu-35', '37-Glu-|-Ala-38', '38-Ala-|-Leu-39', '39-Leu-|-Tyr-40', '40-Tyr-|-Leu-41', '47-Gly-|-Phe-48' and '48-Phe-|-Phe-49' bonds. This Gloydius halys (Chinese water mocassin) protein is Zinc metalloproteinase-disintegrin-like halysase.